The sequence spans 155 residues: Xanthine-guanine phosphoribosyltransferase 2 (155 aa).

Residues 37 to 38 and 91 to 99 each bind 5-phospho-alpha-D-ribose 1-diphosphate; these read RG and DDLVDTGNT. D92 is a Mg(2+) binding site. Residues D95 and I138 each coordinate guanine. Residues D95 and I138 each coordinate xanthine. Residues 95–99 and 137–138 each bind GMP; these read DTGNT and WI.

Belongs to the purine/pyrimidine phosphoribosyltransferase family. XGPT subfamily. Homotetramer. Requires Mg(2+) as cofactor.

Its subcellular location is the cell inner membrane. The enzyme catalyses GMP + diphosphate = guanine + 5-phospho-alpha-D-ribose 1-diphosphate. It catalyses the reaction XMP + diphosphate = xanthine + 5-phospho-alpha-D-ribose 1-diphosphate. It carries out the reaction IMP + diphosphate = hypoxanthine + 5-phospho-alpha-D-ribose 1-diphosphate. It participates in purine metabolism; GMP biosynthesis via salvage pathway; GMP from guanine: step 1/1. The protein operates within purine metabolism; XMP biosynthesis via salvage pathway; XMP from xanthine: step 1/1. Functionally, purine salvage pathway enzyme that catalyzes the transfer of the ribosyl-5-phosphate group from 5-phospho-alpha-D-ribose 1-diphosphate (PRPP) to the N9 position of the 6-oxopurines guanine and xanthine to form the corresponding ribonucleotides GMP (guanosine 5'-monophosphate) and XMP (xanthosine 5'-monophosphate), with the release of PPi. To a lesser extent, also acts on hypoxanthine. The chain is Xanthine-guanine phosphoribosyltransferase 2 from Haemophilus influenzae (strain 86-028NP).